The primary structure comprises 429 residues: UDP-N-acetylglucosamine 1-carboxyvinyltransferase (429 aa).

Phosphoenolpyruvate is bound at residue 22–23 (KN). Position 93 (R93) interacts with UDP-N-acetyl-alpha-D-glucosamine. C117 acts as the Proton donor in catalysis. The residue at position 117 (C117) is a 2-(S-cysteinyl)pyruvic acid O-phosphothioketal. Residues 122 to 126 (RPVDQ), D313, and I335 contribute to the UDP-N-acetyl-alpha-D-glucosamine site.

The protein belongs to the EPSP synthase family. MurA subfamily.

The protein localises to the cytoplasm. The enzyme catalyses phosphoenolpyruvate + UDP-N-acetyl-alpha-D-glucosamine = UDP-N-acetyl-3-O-(1-carboxyvinyl)-alpha-D-glucosamine + phosphate. The protein operates within cell wall biogenesis; peptidoglycan biosynthesis. Functionally, cell wall formation. Adds enolpyruvyl to UDP-N-acetylglucosamine. This Variovorax paradoxus (strain S110) protein is UDP-N-acetylglucosamine 1-carboxyvinyltransferase.